We begin with the raw amino-acid sequence, 170 residues long: APRG1 tumor suppressor candidate (170 aa).

The helical transmembrane segment at 150-170 threads the bilayer; the sequence is IALALAGPGAILILELSWFLG.

In terms of tissue distribution, expressed at high levels in the pancreas and placenta. Expressed at high levels in the kidney.

The protein resides in the membrane. The sequence is that of APRG1 tumor suppressor candidate from Homo sapiens (Human).